A 389-amino-acid chain; its full sequence is S-adenosylmethionine synthase (389 aa).

Histidine 15 lines the ATP pocket. Mg(2+) is bound at residue aspartate 17. Glutamate 43 contacts K(+). The L-methionine site is built by glutamate 56 and glutamine 99. The flexible loop stretch occupies residues 99–109; it reads QSPDIAQGVNE. ATP-binding positions include 166–168, 234–235, aspartate 243, 249–250, alanine 266, and lysine 270; these read DAK, RF, and RK. Aspartate 243 contacts L-methionine. Position 274 (lysine 274) interacts with L-methionine.

It belongs to the AdoMet synthase family. Homotetramer; dimer of dimers. Mg(2+) serves as cofactor. It depends on K(+) as a cofactor.

The protein localises to the cytoplasm. The enzyme catalyses L-methionine + ATP + H2O = S-adenosyl-L-methionine + phosphate + diphosphate. It participates in amino-acid biosynthesis; S-adenosyl-L-methionine biosynthesis; S-adenosyl-L-methionine from L-methionine: step 1/1. Its function is as follows. Catalyzes the formation of S-adenosylmethionine (AdoMet) from methionine and ATP. The overall synthetic reaction is composed of two sequential steps, AdoMet formation and the subsequent tripolyphosphate hydrolysis which occurs prior to release of AdoMet from the enzyme. The chain is S-adenosylmethionine synthase from Chromobacterium violaceum (strain ATCC 12472 / DSM 30191 / JCM 1249 / CCUG 213 / NBRC 12614 / NCIMB 9131 / NCTC 9757 / MK).